A 234-amino-acid polypeptide reads, in one-letter code: MHLTPDQTIFWQWGLFSLNATLIFTWLVMGVLVVGSWFVTRHLSASTQISRGQNLLEVIVLGIRDQIQEIIDQPADPYLPFIGTLFIFIALSNLLSVIPGYQPPTGSLSTTTALALCVFFAVPLYGVQKKGVRGYLQQYLQPNPIMLPFNIIGDFSRIVALAVRLFGNVMSGTMIVGILLSVAPLFFPVMMQVLGLLTGVIQAYIFAILAMVFIAAASQVDQHNYQTDSEVSHG.

Transmembrane regions (helical) follow at residues 20–40 (ATLI…WFVT), 78–98 (YLPF…LSVI), 107–127 (SLST…LYGV), 169–189 (VMSG…FFPV), and 194–214 (LGLL…MVFI).

It belongs to the ATPase A chain family. As to quaternary structure, F-type ATPases have 2 components, CF(1) - the catalytic core - and CF(0) - the membrane proton channel. CF(1) has five subunits: alpha(3), beta(3), gamma(1), delta(1), epsilon(1). CF(0) has four main subunits: a, b, b' and c.

It is found in the cellular thylakoid membrane. Functionally, key component of the proton channel; it plays a direct role in the translocation of protons across the membrane. This Acaryochloris marina (strain MBIC 11017) protein is ATP synthase subunit a 2.